We begin with the raw amino-acid sequence, 179 residues long: Enhancer of split m8 protein (179 aa).

Residues 10 to 65 (YQKVKKPMLERQRRARMNKCLDNLKTLVAELRGDDGILRMDKAEMLESAVIFMRQQ) form the bHLH domain. Residues 83–116 (FKNGYMNAVNEVSRVMASTPGMSVDLGKSVMTHL) enclose the Orange domain. Positions 146–179 (DKAPLSPASSGYHSDCDSPAPSPQPMQQPLWRPW) are disordered. The WRPW motif signature appears at 176–179 (WRPW).

As to quaternary structure, homodimer. Heterodimers with dpn. Transcription repression requires formation of a complex with a corepressor protein (Groucho).

The protein localises to the nucleus. Its function is as follows. Participates in the control of cell fate choice by uncommitted neuroectodermal cells in the embryo. Transcriptional repressor. Binds DNA on N-box motifs: 5'-CACNAG-3'. Part of the Notch signaling pathway. The protein is Enhancer of split m8 protein of Drosophila melanogaster (Fruit fly).